Consider the following 676-residue polypeptide: DNA ligase (676 aa).

Residues 39 to 43 (DYVYD), 88 to 91 (SLND), and Glu-118 each bind NAD(+). Lys-120 acts as the N6-AMP-lysine intermediate in catalysis. Residues Arg-141, Glu-175, Lys-291, and Lys-315 each coordinate NAD(+). Positions 409, 412, 427, and 432 each coordinate Zn(2+). In terms of domain architecture, BRCT spans 595 to 676 (EVESPFKDKT…MVDALDASHF (82 aa)).

It belongs to the NAD-dependent DNA ligase family. LigA subfamily. The cofactor is Mg(2+). Mn(2+) is required as a cofactor.

It carries out the reaction NAD(+) + (deoxyribonucleotide)n-3'-hydroxyl + 5'-phospho-(deoxyribonucleotide)m = (deoxyribonucleotide)n+m + AMP + beta-nicotinamide D-nucleotide.. In terms of biological role, DNA ligase that catalyzes the formation of phosphodiester linkages between 5'-phosphoryl and 3'-hydroxyl groups in double-stranded DNA using NAD as a coenzyme and as the energy source for the reaction. It is essential for DNA replication and repair of damaged DNA. The chain is DNA ligase from Enterococcus faecalis (strain ATCC 700802 / V583).